The chain runs to 266 residues: Movement protein (266 aa).

A compositionally biased stretch (basic residues) spans K212–V227. The disordered stretch occupies residues K212 to F266. Over residues V228–K242 the composition is skewed to low complexity. The segment covering E249 to S259 has biased composition (acidic residues).

Belongs to the tobamovirus movement protein family.

It is found in the host cytoplasm. The protein localises to the host cytoskeleton. The protein resides in the host cell junction. Its subcellular location is the host plasmodesma. In terms of biological role, transports viral genome to neighboring plant cells directly through plasmosdesmata, without any budding. The movement protein allows efficient cell to cell propagation, by bypassing the host cell wall barrier. Forms a ribonucleoprotein complex with viral RNA. Binds microtubules and modulates microtubule stability. Can bind double-stranded DNA. This Capsicum annuum (Capsicum pepper) protein is Movement protein (MP).